A 198-amino-acid polypeptide reads, in one-letter code: Leucyl/phenylalanyl-tRNA--protein transferase (198 aa).

The protein belongs to the L/F-transferase family.

Its subcellular location is the cytoplasm. The catalysed reaction is N-terminal L-lysyl-[protein] + L-leucyl-tRNA(Leu) = N-terminal L-leucyl-L-lysyl-[protein] + tRNA(Leu) + H(+). It carries out the reaction N-terminal L-arginyl-[protein] + L-leucyl-tRNA(Leu) = N-terminal L-leucyl-L-arginyl-[protein] + tRNA(Leu) + H(+). The enzyme catalyses L-phenylalanyl-tRNA(Phe) + an N-terminal L-alpha-aminoacyl-[protein] = an N-terminal L-phenylalanyl-L-alpha-aminoacyl-[protein] + tRNA(Phe). Its function is as follows. Functions in the N-end rule pathway of protein degradation where it conjugates Leu, Phe and, less efficiently, Met from aminoacyl-tRNAs to the N-termini of proteins containing an N-terminal arginine or lysine. This is Leucyl/phenylalanyl-tRNA--protein transferase from Synechocystis sp. (strain ATCC 27184 / PCC 6803 / Kazusa).